The sequence spans 183 residues: Phospholipase A2 inhibitor gamma subunit A1 (183 aa).

Intrachain disulfides connect Cys3–Cys28, Cys6–Cys13, Cys21–Cys49, Cys55–Cys76, Cys77–Cys82, Cys100–Cys125, Cys118–Cys147, and Cys151–Cys173. Asn158 carries N-linked (GlcNAc...) asparagine glycosylation.

This sequence belongs to the CNF-like-inhibitor family. In terms of assembly, heterodimer of subunit A and subunit B. Expressed by the liver.

The protein resides in the secreted. In terms of biological role, phospholipase A2 (PA2) inhibitor. Inhibits the enzymatic activity of PA2 of Deinagkistrodon acutus. Also shows a wide anti-hemorrhage activities to D.acutus, Naja atra and Agkistrodon halys venom. The native protein is more potent than the recombinant one. This is Phospholipase A2 inhibitor gamma subunit A1 from Trimerodytes annularis (Red-bellied annulate keelback).